The sequence spans 516 residues: Cytochrome P450 1A2 (516 aa).

O-linked (GlcNAc) serine glycosylation is present at serine 69. Phenylalanine 226 contributes to the substrate binding site. Cysteine 458 is a binding site for heme.

This sequence belongs to the cytochrome P450 family. As to quaternary structure, interacts with PGRMC1; the interaction requires PGRMC1 homodimerization. Heme serves as cofactor.

Its subcellular location is the endoplasmic reticulum membrane. It localises to the microsome membrane. It catalyses the reaction an organic molecule + reduced [NADPH--hemoprotein reductase] + O2 = an alcohol + oxidized [NADPH--hemoprotein reductase] + H2O + H(+). The enzyme catalyses 17beta-estradiol + reduced [NADPH--hemoprotein reductase] + O2 = 2-hydroxy-17beta-estradiol + oxidized [NADPH--hemoprotein reductase] + H2O + H(+). It carries out the reaction 17beta-estradiol + reduced [NADPH--hemoprotein reductase] + O2 = 4-hydroxy-17beta-estradiol + oxidized [NADPH--hemoprotein reductase] + H2O + H(+). The catalysed reaction is estrone + reduced [NADPH--hemoprotein reductase] + O2 = 2-hydroxyestrone + oxidized [NADPH--hemoprotein reductase] + H2O + H(+). It catalyses the reaction estrone + reduced [NADPH--hemoprotein reductase] + O2 = 4-hydroxyestrone + oxidized [NADPH--hemoprotein reductase] + H2O + H(+). The enzyme catalyses cholesterol + reduced [NADPH--hemoprotein reductase] + O2 = 25-hydroxycholesterol + oxidized [NADPH--hemoprotein reductase] + H2O + H(+). It carries out the reaction all-trans-retinol + reduced [NADPH--hemoprotein reductase] + O2 = all-trans-retinal + oxidized [NADPH--hemoprotein reductase] + 2 H2O + H(+). The catalysed reaction is all-trans-retinal + reduced [NADPH--hemoprotein reductase] + O2 = all-trans-retinoate + oxidized [NADPH--hemoprotein reductase] + H2O + 2 H(+). It catalyses the reaction (5Z,8Z,11Z,14Z)-eicosatetraenoate + reduced [NADPH--hemoprotein reductase] + O2 = (14R,15S)-epoxy-(5Z,8Z,11Z)-eicosatrienoate + oxidized [NADPH--hemoprotein reductase] + H2O + H(+). The enzyme catalyses (5Z,8Z,11Z,14Z)-eicosatetraenoate + reduced [NADPH--hemoprotein reductase] + O2 = (14S,15R)-epoxy-(5Z,8Z,11Z)-eicosatrienoate + oxidized [NADPH--hemoprotein reductase] + H2O + H(+). It carries out the reaction (5Z,8Z,11Z,14Z,17Z)-eicosapentaenoate + reduced [NADPH--hemoprotein reductase] + O2 = (17R,18S)-epoxy-(5Z,8Z,11Z,14Z)-eicosatetraenoate + oxidized [NADPH--hemoprotein reductase] + H2O + H(+). The catalysed reaction is (4Z,7Z,10Z,13Z,16Z,19Z)-docosahexaenoate + reduced [NADPH--hemoprotein reductase] + O2 = (19R,20S)-epoxy-(4Z,7Z,10Z,13Z,16Z)-docosapentaenoate + oxidized [NADPH--hemoprotein reductase] + H2O + H(+). It catalyses the reaction (5S)-hydroperoxy-(6E,8Z,11Z,14Z)-eicosatetraenoate = 5-oxo-(6E,8Z,11Z,14Z)-eicosatetraenoate + H2O. The enzyme catalyses (12S)-hydroperoxy-(5Z,8Z,10E,14Z)-eicosatetraenoate = 12-oxo-(5Z,8Z,10E,14Z)-eicosatetraenoate + H2O. It carries out the reaction (15S)-hydroperoxy-(5Z,8Z,11Z,13E)-eicosatetraenoate = 15-oxo-(5Z,8Z,11Z,13E)-eicosatetraenoate + H2O. The catalysed reaction is (13S)-hydroperoxy-(9Z,11E)-octadecadienoate = 13-oxo-(9Z,11E)-octadecadienoate + H2O. It catalyses the reaction (5Z,8Z,11Z,14Z)-eicosatetraenoate + reduced [NADPH--hemoprotein reductase] + O2 = 13-hydroxy-(5Z,8Z,11Z,14Z)-eicosatetraenoate + oxidized [NADPH--hemoprotein reductase] + H2O + H(+). The enzyme catalyses (5Z,8Z,11Z,14Z)-eicosatetraenoate + reduced [NADPH--hemoprotein reductase] + O2 = 19-hydroxy-(5Z,8Z,11Z,14Z)-eicosatetraenoate + oxidized [NADPH--hemoprotein reductase] + H2O + H(+). It carries out the reaction (9Z,12Z)-octadecadienoate + reduced [NADPH--hemoprotein reductase] + O2 = 11-hydroxy-(9Z,12Z)-octadecadienoate + oxidized [NADPH--hemoprotein reductase] + H2O + H(+). It participates in cofactor metabolism; retinol metabolism. It functions in the pathway steroid metabolism; cholesterol metabolism. The protein operates within lipid metabolism; arachidonate metabolism. Its function is as follows. A cytochrome P450 monooxygenase involved in the metabolism of various endogenous substrates, including fatty acids, steroid hormones and vitamins. Mechanistically, uses molecular oxygen inserting one oxygen atom into a substrate, and reducing the second into a water molecule, with two electrons provided by NADPH via cytochrome P450 reductase (NADPH--hemoprotein reductase). Catalyzes the hydroxylation of carbon-hydrogen bonds. Exhibits high catalytic activity for the formation of hydroxyestrogens from estrone (E1) and 17beta-estradiol (E2), namely 2-hydroxy E1 and E2. Metabolizes cholesterol toward 25-hydroxycholesterol, a physiological regulator of cellular cholesterol homeostasis. May act as a major enzyme for all-trans retinoic acid biosynthesis in the liver. Catalyzes two successive oxidative transformation of all-trans retinol to all-trans retinal and then to the active form all-trans retinoic acid. Primarily catalyzes stereoselective epoxidation of the last double bond of polyunsaturated fatty acids (PUFA), displaying a strong preference for the (R,S) stereoisomer. Catalyzes bisallylic hydroxylation and omega-1 hydroxylation of PUFA. May also participate in eicosanoids metabolism by converting hydroperoxide species into oxo metabolites (lipoxygenase-like reaction, NADPH-independent). Plays a role in the oxidative metabolism of xenobiotics. Catalyzes the N-hydroxylation of heterocyclic amines and the O-deethylation of phenacetin. Metabolizes caffeine via N3-demethylation. This chain is Cytochrome P450 1A2 (CYP1A2), found in Pongo abelii (Sumatran orangutan).